Consider the following 300-residue polypeptide: ATP-dependent (S)-NAD(P)H-hydrate dehydratase (300 aa).

The 280-residue stretch at 14–293 (LLTLFKTIVP…NEISAVFRSD (280 aa)) folds into the YjeF C-terminal domain. Residues G114 and 167–173 (NAMEFRR) contribute to the (6S)-NADPHX site. ATP-binding positions include 198–202 (KGVND) and 219–228 (GSGRRCGGQG). (6S)-NADPHX is bound at residue D229.

This sequence belongs to the NnrD/CARKD family. Requires Mg(2+) as cofactor.

The catalysed reaction is (6S)-NADHX + ATP = ADP + phosphate + NADH + H(+). It catalyses the reaction (6S)-NADPHX + ATP = ADP + phosphate + NADPH + H(+). Catalyzes the dehydration of the S-form of NAD(P)HX at the expense of ATP, which is converted to ADP. Together with NAD(P)HX epimerase, which catalyzes the epimerization of the S- and R-forms, the enzyme allows the repair of both epimers of NAD(P)HX, a damaged form of NAD(P)H that is a result of enzymatic or heat-dependent hydration. In Drosophila pseudoobscura pseudoobscura (Fruit fly), this protein is ATP-dependent (S)-NAD(P)H-hydrate dehydratase.